A 1582-amino-acid chain; its full sequence is Dynein axonemal assembly factor 1 homolog (1582 aa).

LRR repeat units follow at residues 38-60 (RLND…DEYT), 61-82 (ELKS…TKLT), 83-104 (KLKC…EFNR), 105-126 (ELDT…GTDI), 129-150 (VLNT…AALV), and 154-175 (TLSV…KIFE). The LRRCT domain maps to 189–227 (PVVSRLPQYRKTLILACKELTYLDSRPVFPRDRACAEAW). Disordered stretches follow at residues 245–420 (AERR…SEMD), 560–587 (SSDV…VKSQ), 859–878 (FSKD…EDRR), 913–942 (DTGE…DDDA), 1073–1092 (SSNE…LVER), 1101–1137 (MQRM…MGEG), 1150–1218 (TEII…QAEG), 1305–1345 (KDNE…TAKD), 1358–1438 (LDPE…PYQT), 1484–1517 (EDSK…NPKN), and 1529–1548 (PSES…STEQ). The segment covering 313 to 327 (ESQASEHSTTSSTSA) has biased composition (low complexity). The span at 339–392 (HIAERISNRRVKPLEGRPKVLYDEAASGDEKAVTTTDSKKDSNAEDLPELKDIT) shows a compositional bias: basic and acidic residues. A compositionally biased stretch (polar residues) spans 409-420 (TLLQSDSGSEMD). Residues 572 to 582 (ESDEEPTEEEM) are compositionally biased toward acidic residues. The span at 928–942 (SDSESEKEVEEDDDA) shows a compositional bias: acidic residues. Basic and acidic residues-rich tracts occupy residues 1078-1092 (LEAK…LVER) and 1103-1125 (RMKE…KEEE). Residues 1166–1178 (EGGAQQEEGGAQS) show a composition bias toward low complexity. Basic and acidic residues-rich tracts occupy residues 1321 to 1335 (PKEE…ETET), 1398 to 1427 (SALK…KDTE), and 1484 to 1514 (EDSK…RPEN). The segment covering 1529–1540 (PSESLEDTEATE) has biased composition (acidic residues).

Belongs to the DNAAF1 family.

Its subcellular location is the cell projection. It localises to the cilium. In terms of biological role, cilium-specific protein required for cilia structures. This chain is Dynein axonemal assembly factor 1 homolog (dtr), found in Drosophila pseudoobscura pseudoobscura (Fruit fly).